The primary structure comprises 498 residues: Protein YhjJ (498 aa).

The N-terminal stretch at 1–24 (MQGTKIRLLAGGLLMMATAGYVQA) is a signal peptide.

This sequence belongs to the peptidase M16 family.

Its subcellular location is the periplasm. This chain is Protein YhjJ (yhjJ), found in Escherichia coli (strain K12).